We begin with the raw amino-acid sequence, 293 residues long: Formamidopyrimidine-DNA glycosylase (293 aa).

Catalysis depends on Pro-2, which acts as the Schiff-base intermediate with DNA. The active-site Proton donor is the Glu-3. Residue Lys-58 is the Proton donor; for beta-elimination activity of the active site. DNA-binding residues include His-104, Arg-127, and Arg-170. The segment at 257 to 293 (SVYGREGKPCRNPACGGTVERVVQSGRSTFFCASCQT) adopts an FPG-type zinc-finger fold. Catalysis depends on Arg-283, which acts as the Proton donor; for delta-elimination activity.

This sequence belongs to the FPG family. In terms of assembly, monomer. Zn(2+) is required as a cofactor.

The catalysed reaction is Hydrolysis of DNA containing ring-opened 7-methylguanine residues, releasing 2,6-diamino-4-hydroxy-5-(N-methyl)formamidopyrimidine.. It catalyses the reaction 2'-deoxyribonucleotide-(2'-deoxyribose 5'-phosphate)-2'-deoxyribonucleotide-DNA = a 3'-end 2'-deoxyribonucleotide-(2,3-dehydro-2,3-deoxyribose 5'-phosphate)-DNA + a 5'-end 5'-phospho-2'-deoxyribonucleoside-DNA + H(+). Its function is as follows. Involved in base excision repair of DNA damaged by oxidation or by mutagenic agents. Acts as a DNA glycosylase that recognizes and removes damaged bases. Has a preference for oxidized purines, such as 7,8-dihydro-8-oxoguanine (8-oxoG). Has AP (apurinic/apyrimidinic) lyase activity and introduces nicks in the DNA strand. Cleaves the DNA backbone by beta-delta elimination to generate a single-strand break at the site of the removed base with both 3'- and 5'-phosphates. In Brucella melitensis biotype 1 (strain ATCC 23456 / CCUG 17765 / NCTC 10094 / 16M), this protein is Formamidopyrimidine-DNA glycosylase.